A 247-amino-acid chain; its full sequence is GTP cyclohydrolase 1 type 2 homolog (247 aa).

A divalent metal cation is bound by residues His63, His64, Asp101, His215, and Glu219.

It belongs to the GTP cyclohydrolase I type 2/NIF3 family. As to quaternary structure, toroid-shaped homohexamer. In the hexamer, 3 dimers assemble to form a ring-like structure surrounding a central hole.

In terms of biological role, provides significant protection from radiation damage and may be involved in the degradation of radiation-damaged nucleotides. The polypeptide is GTP cyclohydrolase 1 type 2 homolog (ybgI) (Escherichia coli O157:H7).